The sequence spans 420 residues: Serine hydroxymethyltransferase (420 aa).

Residues leucine 123 and 127 to 129 (GHL) contribute to the (6S)-5,6,7,8-tetrahydrofolate site. Position 232 is an N6-(pyridoxal phosphate)lysine (lysine 232).

Belongs to the SHMT family. Homodimer. Pyridoxal 5'-phosphate serves as cofactor.

Its subcellular location is the cytoplasm. It catalyses the reaction (6R)-5,10-methylene-5,6,7,8-tetrahydrofolate + glycine + H2O = (6S)-5,6,7,8-tetrahydrofolate + L-serine. It functions in the pathway one-carbon metabolism; tetrahydrofolate interconversion. Its pathway is amino-acid biosynthesis; glycine biosynthesis; glycine from L-serine: step 1/1. Catalyzes the reversible interconversion of serine and glycine with tetrahydrofolate (THF) serving as the one-carbon carrier. This reaction serves as the major source of one-carbon groups required for the biosynthesis of purines, thymidylate, methionine, and other important biomolecules. Also exhibits THF-independent aldolase activity toward beta-hydroxyamino acids, producing glycine and aldehydes, via a retro-aldol mechanism. The chain is Serine hydroxymethyltransferase from Ehrlichia chaffeensis (strain ATCC CRL-10679 / Arkansas).